The primary structure comprises 229 residues: Large ribosomal subunit protein uL1 (229 aa).

The protein belongs to the universal ribosomal protein uL1 family. In terms of assembly, part of the 50S ribosomal subunit.

Binds directly to 23S rRNA. The L1 stalk is quite mobile in the ribosome, and is involved in E site tRNA release. In terms of biological role, protein L1 is also a translational repressor protein, it controls the translation of the L11 operon by binding to its mRNA. This chain is Large ribosomal subunit protein uL1, found in Streptococcus equi subsp. equi (strain 4047).